The sequence spans 240 residues: Ribonuclease 3 (240 aa).

The region spanning 10–136 (VREFQETVGV…LIGAVYLDRG (127 aa)) is the RNase III domain. E49 serves as a coordination point for Mg(2+). D53 is a catalytic residue. Residues D122 and E125 each coordinate Mg(2+). E125 is a catalytic residue. The DRBM domain maps to 163–231 (DWKTSLQELT…AESAWKAIRA (69 aa)). The interval 205 to 240 (TYGSGEGRSKKEAEQQAAESAWKAIRAATEKAKQES) is disordered. Positions 219–228 (QQAAESAWKA) are enriched in low complexity.

This sequence belongs to the ribonuclease III family. As to quaternary structure, homodimer. Requires Mg(2+) as cofactor.

It localises to the cytoplasm. The enzyme catalyses Endonucleolytic cleavage to 5'-phosphomonoester.. Digests double-stranded RNA. Involved in the processing of primary rRNA transcript to yield the immediate precursors to the large and small rRNAs (23S and 16S). Processes some mRNAs, and tRNAs when they are encoded in the rRNA operon. Processes pre-crRNA and tracrRNA of type II CRISPR loci if present in the organism. The chain is Ribonuclease 3 from Thermobifida fusca (strain YX).